The chain runs to 414 residues: CCA-adding enzyme (414 aa).

ATP contacts are provided by G8 and R11. CTP is bound by residues G8 and R11. Residues D21 and D23 each contribute to the Mg(2+) site. The ATP site is built by R92, R138, and R141. Residues R92, R138, and R141 each contribute to the CTP site.

It belongs to the tRNA nucleotidyltransferase/poly(A) polymerase family. Bacterial CCA-adding enzyme type 2 subfamily. It depends on Mg(2+) as a cofactor.

It catalyses the reaction a tRNA precursor + 2 CTP + ATP = a tRNA with a 3' CCA end + 3 diphosphate. The catalysed reaction is a tRNA with a 3' CCA end + 2 CTP + ATP = a tRNA with a 3' CCACCA end + 3 diphosphate. Functionally, catalyzes the addition and repair of the essential 3'-terminal CCA sequence in tRNAs without using a nucleic acid template. Adds these three nucleotides in the order of C, C, and A to the tRNA nucleotide-73, using CTP and ATP as substrates and producing inorganic pyrophosphate. tRNA 3'-terminal CCA addition is required both for tRNA processing and repair. Also involved in tRNA surveillance by mediating tandem CCA addition to generate a CCACCA at the 3' terminus of unstable tRNAs. While stable tRNAs receive only 3'-terminal CCA, unstable tRNAs are marked with CCACCA and rapidly degraded. In Buchnera aphidicola subsp. Cinara cedri (strain Cc), this protein is CCA-adding enzyme.